The following is a 432-amino-acid chain: Enolase (432 aa).

Q167 provides a ligand contact to (2R)-2-phosphoglycerate. Residue E209 is the Proton donor of the active site. Mg(2+)-binding residues include D246, E290, and D317. The (2R)-2-phosphoglycerate site is built by K342, R371, S372, and K393. Catalysis depends on K342, which acts as the Proton acceptor.

Belongs to the enolase family. In terms of assembly, component of the RNA degradosome, a multiprotein complex involved in RNA processing and mRNA degradation. It depends on Mg(2+) as a cofactor.

The protein localises to the cytoplasm. It localises to the secreted. It is found in the cell surface. It catalyses the reaction (2R)-2-phosphoglycerate = phosphoenolpyruvate + H2O. The protein operates within carbohydrate degradation; glycolysis; pyruvate from D-glyceraldehyde 3-phosphate: step 4/5. In terms of biological role, catalyzes the reversible conversion of 2-phosphoglycerate (2-PG) into phosphoenolpyruvate (PEP). It is essential for the degradation of carbohydrates via glycolysis. The sequence is that of Enolase from Escherichia coli O139:H28 (strain E24377A / ETEC).